A 165-amino-acid chain; its full sequence is Phosphopantetheine adenylyltransferase (165 aa).

Ser10 is a binding site for substrate. ATP is bound by residues 10-11 and His18; that span reads SF. Lys42, Leu74, and Arg88 together coordinate substrate. ATP contacts are provided by residues 89–91, Glu99, and 124–130; these read GLR and YSFISSS.

It belongs to the bacterial CoaD family. Homohexamer. The cofactor is Mg(2+).

The protein localises to the cytoplasm. It catalyses the reaction (R)-4'-phosphopantetheine + ATP + H(+) = 3'-dephospho-CoA + diphosphate. The protein operates within cofactor biosynthesis; coenzyme A biosynthesis; CoA from (R)-pantothenate: step 4/5. Its function is as follows. Reversibly transfers an adenylyl group from ATP to 4'-phosphopantetheine, yielding dephospho-CoA (dPCoA) and pyrophosphate. The polypeptide is Phosphopantetheine adenylyltransferase (Macrococcus caseolyticus (strain JCSC5402) (Macrococcoides caseolyticum)).